The sequence spans 2309 residues: Collagen alpha-4(VI) chain (2309 aa).

A signal peptide spans 1–22; the sequence is MGTWKTFWLIISLAAGLGFVKS. Positions 21–1410 are nonhelical region; sequence KSQRIVCREA…TCCNMYAKCY (1390 aa). 6 VWFA domains span residues 34–206, 235–413, 430–653, 634–811, 849–1018, and 1030–1199; these read DIVF…AQKL, DIVF…LQAL, DVVF…FQRV, DLVF…GNKL, DIYF…IRDI, and DIIF…EKEI. Asn-188 carries an N-linked (GlcNAc...) asparagine glycan. An N-linked (GlcNAc...) asparagine glycan is attached at Asn-754. Residue Asn-1114 is glycosylated (N-linked (GlcNAc...) asparagine). The tract at residues 1411-1744 is triple-helical region; sequence GDDGIRGEPG…GKMGTKGSKG (334 aa). The segment covering 1414–1430 has biased composition (basic and acidic residues); sequence GIRGEPGSRGEQGERGL. Residues 1414-1746 form a disordered region; it reads GIRGEPGSRG…MGTKGSKGLA (333 aa). Positions 1480-1489 are enriched in gly residues; sequence GEEGVGGLDG. A Cell attachment site motif is present at residues 1527-1529; the sequence is RGD. Composition is skewed to low complexity over residues 1605-1621 and 1650-1669; these read PRGR…KGDP and PAGE…PGLF. The interval 1745 to 2309 is nonhelical region; sequence LADRTPCEIV…EGECLNYVLK (565 aa). 2 consecutive VWFA domains span residues 1776–1957 and 1982–2187; these read EVVF…ASCT and DLVF…LNLL. A Cell attachment site motif is present at residues 2208 to 2210; the sequence is RGD. The interval 2262-2300 is disordered; that stretch reads ALGSHGKDRADTEDIDQETPAKGRHLGPTHGPCPMGPEE.

This sequence belongs to the type VI collagen family. Trimers composed of three different chains: alpha-1(VI), alpha-2(VI), and alpha-3(VI) or alpha-4(VI) or alpha-5(VI) or alpha-6(VI). Prolines at the third position of the tripeptide repeating unit (G-X-Y) are hydroxylated in some or all of the chains. In terms of tissue distribution, in newborn, it is expressed in lung, kidney, brain, intestine, skin, sternum and, at weak level, calvaria. In adult, it is almost absent with some weak expression in ovary and very weak expression in spleen, lung, uterus and brain.

The protein localises to the secreted. Its subcellular location is the extracellular space. It localises to the extracellular matrix. Collagen VI acts as a cell-binding protein. This is Collagen alpha-4(VI) chain (Col6a4) from Mus musculus (Mouse).